The primary structure comprises 616 residues: MPKYRSATTTHGRNMAGARALWRATGMTDDDFGKPIIAVVNSFTQFVPGHVHLRDLGKLVAEQIEASGGVAKEFNTIAVDDGIAMGHGGMLYSLPSRELIADSVEYMVNAHCADAMVCISNCDKITPGMLMASLRLNIPVIFVSGGPMEAGKTKLSDKIIKLDLIDAMIQGANPNVSDADSAQIERSACPTCGSCSGMFTANSMNCLTEALGLSQPGNGSLLATHADRKDLFLNAGKRIVALTKRYYEQDDESALPRSIANKAAFENAMTLDIAMGGSTNTVLHLLAAAQEGEIDFTMEDIDRLSRKVPHLCKVAPSTQKYHMEDVHRAGGVLAILGELDRAGLMNRDVDNILGLKLTETLNQYDIMLTQDEAVKKMFRAGPAGIRTTQAFSQDCRWDTLDDDRAEGCIRSLENAFSLEGGLAVLYGNMALDGSIVKTAGVDKDNLTFRGPAKVYESQDTAVEAILGGKVVAGDVVVIRYEGPKGGPGMQEMLYPTTYLKSMGLGKACALITDGRFSGGTSGLSIGHVSPEAGSGGLIALIEDGDMIDIDIPKRSMVLDVSDSELAARREVELARGDRAWTPKNRERQVSFALRAYATLATSADKGAVRDKSKLGG.

Position 81 (D81) interacts with Mg(2+). Residue C122 participates in [2Fe-2S] cluster binding. Mg(2+) contacts are provided by D123 and K124. At K124 the chain carries N6-carboxylysine. C195 contacts [2Fe-2S] cluster. Mg(2+) is bound at residue E491. S517 functions as the Proton acceptor in the catalytic mechanism.

This sequence belongs to the IlvD/Edd family. In terms of assembly, homodimer. Requires [2Fe-2S] cluster as cofactor. The cofactor is Mg(2+).

The catalysed reaction is (2R)-2,3-dihydroxy-3-methylbutanoate = 3-methyl-2-oxobutanoate + H2O. It catalyses the reaction (2R,3R)-2,3-dihydroxy-3-methylpentanoate = (S)-3-methyl-2-oxopentanoate + H2O. The protein operates within amino-acid biosynthesis; L-isoleucine biosynthesis; L-isoleucine from 2-oxobutanoate: step 3/4. Its pathway is amino-acid biosynthesis; L-valine biosynthesis; L-valine from pyruvate: step 3/4. In terms of biological role, functions in the biosynthesis of branched-chain amino acids. Catalyzes the dehydration of (2R,3R)-2,3-dihydroxy-3-methylpentanoate (2,3-dihydroxy-3-methylvalerate) into 2-oxo-3-methylpentanoate (2-oxo-3-methylvalerate) and of (2R)-2,3-dihydroxy-3-methylbutanoate (2,3-dihydroxyisovalerate) into 2-oxo-3-methylbutanoate (2-oxoisovalerate), the penultimate precursor to L-isoleucine and L-valine, respectively. The sequence is that of Dihydroxy-acid dehydratase from Serratia proteamaculans (strain 568).